Here is a 1168-residue protein sequence, read N- to C-terminus: Transcription-repair-coupling factor (1168 aa).

The region spanning 633 to 794 is the Helicase ATP-binding domain; the sequence is DMQKSRPMDR…MLGVRDLSVI (162 aa). 646 to 653 provides a ligand contact to ATP; the sequence is GDVGYGKT. Residues 747-750 carry the DEEQ box motif; it reads DEEQ. Positions 808 to 969 constitute a Helicase C-terminal domain; that stretch reads VLEQNMSFIK…GFKIAMRDLN (162 aa).

The protein in the N-terminal section; belongs to the UvrB family. This sequence in the C-terminal section; belongs to the helicase family. RecG subfamily.

It is found in the cytoplasm. Functionally, couples transcription and DNA repair by recognizing RNA polymerase (RNAP) stalled at DNA lesions. Mediates ATP-dependent release of RNAP and its truncated transcript from the DNA, and recruitment of nucleotide excision repair machinery to the damaged site. The polypeptide is Transcription-repair-coupling factor (Staphylococcus aureus (strain bovine RF122 / ET3-1)).